A 127-amino-acid chain; its full sequence is uncharacterized protein (127 aa).

The interval 69–94 (GDGGSVPEKGKHGILGAQGQEHPGLN) is disordered.

This is an uncharacterized protein from Homo sapiens (Human).